The following is a 443-amino-acid chain: Histone deacetylase 10, chloroplastic (443 aa).

The transit peptide at 1–65 (MEQLWVPSLP…PSHNGTSISD (65 aa)) directs the protein to the chloroplast. The interval 82-412 (DAHILYCTSP…FRAFLGEPSL (331 aa)) is histone deacetylase. The active-site Proton donor/acceptor is histidine 222. The Zn(2+) site is built by aspartate 259, histidine 261, and aspartate 346.

It belongs to the histone deacetylase family. Zn(2+) serves as cofactor. As to expression, expressed in leaves. Expressed in coleoptiles, leaves, flag leaves and flowers. Expressed at low levels in roots.

It is found in the plastid. The protein localises to the chloroplast. Its subcellular location is the mitochondrion. It carries out the reaction N-acetylserotonin + H2O = serotonin + acetate. The enzyme catalyses N-acetyltyramine + H2O = tyramine + acetate. It catalyses the reaction N-acetyltryptamine + H2O = tryptamine + acetate. The catalysed reaction is melatonin + H2O = 5-methoxytryptamine + acetate. Its activity is regulated as follows. The activity of this enzyme is not inhibited by butyrate, a well-known histone deacetylase inhibitor. Functionally, involved in the regulation of melatonin biosynthesis by catalyzing the deacetylation of N-acetylserotonin to produce serotonin. N-acetylserotonin is methylated by acetylserotonin O-methyltransferase (ASMT) to produce melatonin (N-acetyl-5-methoxytryptamine). Deacetylates melatonin to produce 5-methoxytryptamine. In vitro, deacetylates N-acetyltyramine and N-acetyltryptamine to produce tyramine and tryptamine, respectively. The protein is Histone deacetylase 10, chloroplastic of Oryza sativa subsp. japonica (Rice).